Consider the following 518-residue polypeptide: GMP synthase [glutamine-hydrolyzing] (518 aa).

Residues 11 to 203 (KIIVLDFGSQ…AFDVCQARSN (193 aa)) form the Glutamine amidotransferase type-1 domain. Residue C88 is the Nucleophile of the active site. Active-site residues include H177 and E179. A GMPS ATP-PPase domain is found at 204–393 (WSMDDFIDMQ…LGMPHELVWR (190 aa)). Residue 231-237 (SGGVDSS) coordinates ATP.

In terms of assembly, homodimer.

It catalyses the reaction XMP + L-glutamine + ATP + H2O = GMP + L-glutamate + AMP + diphosphate + 2 H(+). It participates in purine metabolism; GMP biosynthesis; GMP from XMP (L-Gln route): step 1/1. In terms of biological role, catalyzes the synthesis of GMP from XMP. The sequence is that of GMP synthase [glutamine-hydrolyzing] from Ligilactobacillus salivarius (strain UCC118) (Lactobacillus salivarius).